A 61-amino-acid polypeptide reads, in one-letter code: MNFSRVLFFVFACLSAFAMASAAPWNPFKELERAGQRVRDAVISAAAVATVGQAAAIARGG.

Residues 1–22 (MNFSRVLFFVFACLSAFAMASA) form the signal peptide. The propeptide at 23 to 24 (AP) is removed by a dipeptidylpeptidase. Position 60 is a glycine amide (G60).

Belongs to the cecropin family.

The protein localises to the secreted. Its function is as follows. Cecropins have lytic and antibacterial activity against several Gram-positive and Gram-negative bacteria. In Manduca sexta (Tobacco hawkmoth), this protein is Bactericidin B-5P.